The sequence spans 184 residues: dITP/XTP pyrophosphatase (184 aa).

8 to 13 (TGNKGK) contributes to the substrate binding site. Mg(2+) is bound by residues glutamate 37 and aspartate 66. Residue aspartate 66 is the Proton acceptor of the active site. Substrate-binding positions include serine 67, 142 to 145 (FGYD), lysine 163, and 168 to 169 (HR).

Belongs to the HAM1 NTPase family. Homodimer. The cofactor is Mg(2+).

It carries out the reaction XTP + H2O = XMP + diphosphate + H(+). It catalyses the reaction dITP + H2O = dIMP + diphosphate + H(+). The enzyme catalyses ITP + H2O = IMP + diphosphate + H(+). Functionally, pyrophosphatase that catalyzes the hydrolysis of nucleoside triphosphates to their monophosphate derivatives, with a high preference for the non-canonical purine nucleotides XTP (xanthosine triphosphate), dITP (deoxyinosine triphosphate) and ITP. Seems to function as a house-cleaning enzyme that removes non-canonical purine nucleotides from the nucleotide pool, thus preventing their incorporation into DNA/RNA and avoiding chromosomal lesions. The protein is dITP/XTP pyrophosphatase of Methanosarcina mazei (strain ATCC BAA-159 / DSM 3647 / Goe1 / Go1 / JCM 11833 / OCM 88) (Methanosarcina frisia).